The chain runs to 169 residues: Lachrymatory-factor synthase (169 aa).

A propeptide spanning residues 1–12 is cleaved from the precursor; the sequence is MELNPGAPAVVA. Active-site proton donor/acceptor residues include Glu-88 and Tyr-102.

It localises to the vacuole. The catalysed reaction is (E)-prop-1-en-1-SO-peroxol = (Z)-propanethial S-oxide. It carries out the reaction (E)-alk-1-en-1-SO-peroxol = (Z)-alkanethial oxide. Its function is as follows. Produces lacrymatory factor (propanthial S-oxide) from 1-propenylsulphenic acid, an unstable compound resulting from the degradation of trans-1-propenyl-L-cysteine sulphoxide (PRENCSO) by alliinase. This chain is Lachrymatory-factor synthase, found in Allium cepa (Onion).